The sequence spans 162 residues: Beta-lactoglobulin-1 (162 aa).

Cystine bridges form between cysteine 66–cysteine 160 and cysteine 106–cysteine 119.

Belongs to the calycin superfamily. Lipocalin family. In terms of assembly, monomer.

The protein resides in the secreted. Functionally, lactoglobulin is the primary component of whey, it binds retinol and is probably involved in the transport of that molecule. In Felis catus (Cat), this protein is Beta-lactoglobulin-1 (LGB1).